A 754-amino-acid chain; its full sequence is Protein tyrosine phosphatase domain-containing protein 1 (754 aa).

In terms of domain architecture, Tyrosine-protein phosphatase spans 82-253 (YSSWVTDNIL…LTPLRNIFSC (172 aa)). The active-site Phosphocysteine intermediate is C190. 2 positions are modified to phosphoserine: S392 and S394. Over residues 487–498 (SGAFSADVSGSH) the composition is skewed to polar residues. The segment at 487–554 (SGAFSADVSG…PRSPLDCGSS (68 aa)) is disordered. S547 carries the phosphoserine modification.

Belongs to the protein-tyrosine phosphatase family. Non-receptor class PTPDC1 subfamily.

Functionally, may play roles in cilia formation and/or maintenance. In Homo sapiens (Human), this protein is Protein tyrosine phosphatase domain-containing protein 1 (PTPDC1).